Consider the following 66-residue polypeptide: Small ribosomal subunit protein bS21B (66 aa).

The segment at 38 to 66 is disordered; the sequence is YVKPTQKRKIAKKAAISKAKKEARRSYSY.

Belongs to the bacterial ribosomal protein bS21 family.

The polypeptide is Small ribosomal subunit protein bS21B (Francisella tularensis subsp. tularensis (strain SCHU S4 / Schu 4)).